The primary structure comprises 122 residues: Large ribosomal subunit protein uL14 (122 aa).

This sequence belongs to the universal ribosomal protein uL14 family. In terms of assembly, part of the 50S ribosomal subunit. Forms a cluster with proteins L3 and L19. In the 70S ribosome, L14 and L19 interact and together make contacts with the 16S rRNA in bridges B5 and B8.

Binds to 23S rRNA. Forms part of two intersubunit bridges in the 70S ribosome. The protein is Large ribosomal subunit protein uL14 of Colwellia psychrerythraea (strain 34H / ATCC BAA-681) (Vibrio psychroerythus).